We begin with the raw amino-acid sequence, 286 residues long: Cbb3-type cytochrome c oxidase subunit CcoP (286 aa).

Helical transmembrane passes span 11-31 (FGLI…SSLI) and 62-82 (VGWI…FFFG). 2 consecutive Cytochrome c domains span residues 116–195 (ELVD…MAEL) and 205–286 (QLID…LSNR). C129, C132, H133, M174, C219, C222, H223, and M264 together coordinate heme c.

This sequence belongs to the CcoP / FixP family. As to quaternary structure, component of the cbb3-type cytochrome c oxidase at least composed of CcoN, CcoO, CcoQ and CcoP. Requires heme c as cofactor.

The protein resides in the cell inner membrane. The protein operates within energy metabolism; oxidative phosphorylation. Its function is as follows. C-type cytochrome. Part of the cbb3-type cytochrome c oxidase complex. CcoP subunit is required for transferring electrons from donor cytochrome c via its heme groups to CcoO subunit. From there, electrons are shuttled to the catalytic binuclear center of CcoN subunit where oxygen reduction takes place. The complex also functions as a proton pump. The sequence is that of Cbb3-type cytochrome c oxidase subunit CcoP from Helicobacter pylori (strain ATCC 700392 / 26695) (Campylobacter pylori).